The chain runs to 290 residues: Proteasome assembly chaperone 1 (290 aa).

Positions 1–39 (MAATFFGEVVKAPCRAGTEDEEEEEEEEGRRETPEDREV) are disordered. N-acetylalanine is present on Ala-2. Residue Thr-18 is modified to Phosphothreonine. The segment covering 28–39 (EGRRETPEDREV) has biased composition (basic and acidic residues). Thr-56 carries the post-translational modification Phosphothreonine. Residue Ser-182 is modified to Phosphoserine. Lys-266 bears the N6-acetyllysine mark.

The protein belongs to the PSMG1 family. In terms of assembly, forms a heterodimer with PSMG2. The PSMG1-PSMG2 heterodimer interacts directly with the PSMA5 and PSMA7 proteasome alpha subunits. Degraded by the proteasome upon completion of 20S proteasome maturation.

It is found in the cytoplasm. It localises to the endoplasmic reticulum. Its function is as follows. Chaperone protein which promotes assembly of the 20S proteasome as part of a heterodimer with PSMG2. The PSMG1-PSMG2 heterodimer binds to the PSMA5 and PSMA7 proteasome subunits, promotes assembly of the proteasome alpha subunits into the heteroheptameric alpha ring and prevents alpha ring dimerization. This is Proteasome assembly chaperone 1 (PSMG1) from Papio anubis (Olive baboon).